Here is a 221-residue protein sequence, read N- to C-terminus: Vesicle-associated membrane protein 722 (221 aa).

The Cytoplasmic portion of the chain corresponds to 1-196; sequence MAQQSLIYSF…MWFQNMKIKL (196 aa). In terms of domain architecture, Longin spans 10-114; sequence FVARGTVILV…SLNKEFGSKL (105 aa). The v-SNARE coiled-coil homology domain maps to 130-190; sequence KLAKVKAQVS…TQMRRKMWFQ (61 aa). The helical; Anchor for type IV membrane protein transmembrane segment at 197-217 threads the bilayer; it reads IVLAIIIALILIIILSICGGF. The Vesicular portion of the chain corresponds to 218-221; that stretch reads NCGK.

This sequence belongs to the synaptobrevin family. Highly expressed in stems and roots. Detected in flowers and leaves.

The protein resides in the cell membrane. The protein localises to the early endosome membrane. Functionally, involved in the targeting and/or fusion of transport vesicles to their target membrane. The chain is Vesicle-associated membrane protein 722 from Arabidopsis thaliana (Mouse-ear cress).